Reading from the N-terminus, the 150-residue chain is Lymphocyte antigen 6 complex locus protein G5c (150 aa).

Residues 1-41 (MRFMAGPAGSQSLGPLCFHSSPQALYTVLLIVLVMMSLVFG) form the signal peptide. In terms of domain architecture, UPAR/Ly6 spans 60 to 150 (LRCYRCLLET…DPQNRGLYTP (91 aa)). 4 disulfides stabilise this stretch: Cys62-Cys89, Cys65-Cys74, Cys81-Cys107, and Cys134-Cys139. N-linked (GlcNAc...) asparagine glycosylation occurs at Asn96.

In terms of assembly, forms oligomers. N-glycosylated. Detected in T-cell lines and fetal and adult lung.

It localises to the secreted. Functionally, may have a role in hematopoietic cell differentiation. The chain is Lymphocyte antigen 6 complex locus protein G5c (LY6G5C) from Homo sapiens (Human).